Reading from the N-terminus, the 183-residue chain is Ribonuclease H (183 aa).

One can recognise an RNase H type-1 domain in the interval 2–151 (SQARFIAFSD…VDQLAQAAAR (150 aa)). 4 residues coordinate Mg(2+): D11, E57, D79, and D143.

This sequence belongs to the RNase H family. In terms of assembly, monomer. It depends on Mg(2+) as a cofactor.

The protein resides in the cytoplasm. The catalysed reaction is Endonucleolytic cleavage to 5'-phosphomonoester.. Functionally, endonuclease that specifically degrades the RNA of RNA-DNA hybrids. In Anaeromyxobacter sp. (strain K), this protein is Ribonuclease H.